A 671-amino-acid polypeptide reads, in one-letter code: Oviduct-specific glycoprotein (671 aa).

A signal peptide spans 1 to 21; sequence MGRLLLWVGLVLLMKPNDGTA. The GH18 domain maps to 22–385; the sequence is YKLVCYFTNW…HILNELLVRA (364 aa). An intrachain disulfide couples C26 to C51. Chitin-binding positions include 71–72, 98–101, Y142, 211–214, and W355; these read LQ, GGWN, and LSYD. N-linked (GlcNAc...) asparagine glycosylation is present at N402. 8 consecutive repeat copies span residues 490-504, 505-519, 520-534, 535-549, 550-564, 565-579, 580-594, and 595-609. The tract at residues 490-609 is 8 X 15 AA tandem repeats; the sequence is TGMTVTVQTQ…GSQSVTPPGM (120 aa). N-linked (GlcNAc...) asparagine glycans are attached at residues N511, N526, N541, N556, N571, and N586.

It belongs to the glycosyl hydrolase 18 family. In terms of processing, highly O-glycosylated and also N-glycosylated. Oviduct.

Its subcellular location is the cytoplasmic vesicle. The protein localises to the secretory vesicle. Functionally, binds to oocyte zona pellucida in vivo. May play a role in the fertilization process and/or early embryonic development. Might act as a protective secretion influencing the first steps of the reproductive process necessary for the normal triggering of fertilization and early embryonic development. In Mesocricetus auratus (Golden hamster), this protein is Oviduct-specific glycoprotein (OVGP1).